Reading from the N-terminus, the 157-residue chain is Cyclic pyranopterin monophosphate synthase (157 aa).

Residues 74-76 and 110-111 each bind substrate; these read MCH and ME. The active site involves Asp-125.

The protein belongs to the MoaC family. Homohexamer; trimer of dimers.

It catalyses the reaction (8S)-3',8-cyclo-7,8-dihydroguanosine 5'-triphosphate = cyclic pyranopterin phosphate + diphosphate. It functions in the pathway cofactor biosynthesis; molybdopterin biosynthesis. Its function is as follows. Catalyzes the conversion of (8S)-3',8-cyclo-7,8-dihydroguanosine 5'-triphosphate to cyclic pyranopterin monophosphate (cPMP). The sequence is that of Cyclic pyranopterin monophosphate synthase from Peptoclostridium acidaminophilum (Eubacterium acidaminophilum).